A 488-amino-acid chain; its full sequence is MKEEKSFVKEITPQSEDFSRWYIDVIRKADLMDYTPVRGCIVFKPDGYELWERIQAGLDKRFKETGHRNAYFPMLIPESFFQKEKEHVEGFNPELPWVTEAGGEKLEERLALRPTSETIIGHMYAQWIQSYRDLPVLINQWANVFRWEKRTLPFLRTSEFLWQEGHTAHATEEEAREETMRMLEVYRDFVETEMAIPLYVGQKTPSEKFAGAVDTYSIEAMMKDGKALQAGTSHYLGQNFAKGFEIKFLDRDNQLKYVHTTSWGVSTRLIGALIMVHGDDRGLALPPRLAPIQVIMIPVGPPKFRDKVMARFDPLFDALKAAGVRVKADLREETPGWKFNEWEMRGVPLRIEIGPRDVDNKQCLMVRRDTGEKIPVPLDEAVERVQALLEEIQRNMFVKAKEFRDAHSHLHINTLAELKAHIARCEETGEIAGFVLAGWCGDAACEAKVKEETKFTSRNIPFHPPARKQVCLCCGKEAQHTVWFARAY.

Belongs to the class-II aminoacyl-tRNA synthetase family. ProS type 3 subfamily. In terms of assembly, homodimer.

Its subcellular location is the cytoplasm. The enzyme catalyses tRNA(Pro) + L-proline + ATP = L-prolyl-tRNA(Pro) + AMP + diphosphate. Its function is as follows. Catalyzes the attachment of proline to tRNA(Pro) in a two-step reaction: proline is first activated by ATP to form Pro-AMP and then transferred to the acceptor end of tRNA(Pro). This is Proline--tRNA ligase from Symbiobacterium thermophilum (strain DSM 24528 / JCM 14929 / IAM 14863 / T).